A 365-amino-acid chain; its full sequence is Aminomethyltransferase (365 aa).

Belongs to the GcvT family. As to quaternary structure, the glycine cleavage system is composed of four proteins: P, T, L and H.

It carries out the reaction N(6)-[(R)-S(8)-aminomethyldihydrolipoyl]-L-lysyl-[protein] + (6S)-5,6,7,8-tetrahydrofolate = N(6)-[(R)-dihydrolipoyl]-L-lysyl-[protein] + (6R)-5,10-methylene-5,6,7,8-tetrahydrofolate + NH4(+). The glycine cleavage system catalyzes the degradation of glycine. The sequence is that of Aminomethyltransferase from Yersinia enterocolitica serotype O:8 / biotype 1B (strain NCTC 13174 / 8081).